The chain runs to 245 residues: 1-(5-phosphoribosyl)-5-[(5-phosphoribosylamino)methylideneamino] imidazole-4-carboxamide isomerase (245 aa).

Residue aspartate 8 is the Proton acceptor of the active site. Aspartate 130 (proton donor) is an active-site residue.

This sequence belongs to the HisA/HisF family.

The protein localises to the cytoplasm. It catalyses the reaction 1-(5-phospho-beta-D-ribosyl)-5-[(5-phospho-beta-D-ribosylamino)methylideneamino]imidazole-4-carboxamide = 5-[(5-phospho-1-deoxy-D-ribulos-1-ylimino)methylamino]-1-(5-phospho-beta-D-ribosyl)imidazole-4-carboxamide. It participates in amino-acid biosynthesis; L-histidine biosynthesis; L-histidine from 5-phospho-alpha-D-ribose 1-diphosphate: step 4/9. This chain is 1-(5-phosphoribosyl)-5-[(5-phosphoribosylamino)methylideneamino] imidazole-4-carboxamide isomerase, found in Teredinibacter turnerae (strain ATCC 39867 / T7901).